The following is a 37-amino-acid chain: Putative preoptic regulatory factor 1 (37 aa).

Propeptides lie at residues 1–7 (MPYSLQP) and 18–37 (FPLC…PPDL).

This sequence belongs to the GnRH family. As to expression, preoptic area and testis.

It is found in the secreted. In terms of biological role, precursor for a gonadotropin regulatory hormone (GNRH) related decapeptide. The sequence is that of Putative preoptic regulatory factor 1 (Porf1) from Rattus norvegicus (Rat).